The chain runs to 430 residues: Pyrokinin-1 receptor (430 aa).

Topologically, residues Met-1–Pro-16 are extracellular. A glycan (N-linked (GlcNAc...) asparagine) is linked at Asn-5. Residues Leu-17–Gly-37 traverse the membrane as a helical segment. Topologically, residues Asn-38–Thr-53 are cytoplasmic. Residues Ala-54–Val-74 traverse the membrane as a helical segment. Residues Pro-75–Gly-96 lie on the Extracellular side of the membrane. Cysteines 94 and 171 form a disulfide. Residues Arg-97–Val-117 form a helical membrane-spanning segment. Over Glu-118–Arg-140 the chain is Cytoplasmic. A helical membrane pass occupies residues Ile-141–Gly-161. Over Ile-162 to Ser-185 the chain is Extracellular. Residues Thr-186–Val-206 form a helical membrane-spanning segment. Over His-207–Arg-281 the chain is Cytoplasmic. The chain crosses the membrane as a helical span at residues Val-282 to Ala-302. Residues Gln-303–His-321 are Extracellular-facing. A helical membrane pass occupies residues Glu-322–Ile-342. The Cytoplasmic segment spans residues Asn-343–Asn-430. Residues Thr-388 to Ser-397 are compositionally biased toward polar residues. The segment at Thr-388–Thr-413 is disordered.

This sequence belongs to the G-protein coupled receptor 1 family.

The protein resides in the cell membrane. Its function is as follows. Receptor for the neuropeptide CAP-3/pyrokinin-1 (TGPSASSGLWFGPRL-amide). Also activated weakly by other neuropeptides terminating in the sequence PRL-amide including pyrokinin-2, Hug-gamma, and ecdysis-triggering-hormone-1. The activity of this receptor is mediated by G proteins which activate a phosphatidyl-inositol-calcium second messenger system. The protein is Pyrokinin-1 receptor of Drosophila melanogaster (Fruit fly).